A 344-amino-acid polypeptide reads, in one-letter code: Probable dual-specificity RNA methyltransferase RlmN (344 aa).

E92 serves as the catalytic Proton acceptor. Positions D98–D325 constitute a Radical SAM core domain. C105 and C330 are joined by a disulfide. Residues C112, C116, and C119 each contribute to the [4Fe-4S] cluster site. S-adenosyl-L-methionine is bound by residues G157 to E158, S189, S211 to H213, and H287. The active-site S-methylcysteine intermediate is the C330.

It belongs to the radical SAM superfamily. RlmN family. It depends on [4Fe-4S] cluster as a cofactor.

The protein resides in the cytoplasm. It carries out the reaction adenosine(2503) in 23S rRNA + 2 reduced [2Fe-2S]-[ferredoxin] + 2 S-adenosyl-L-methionine = 2-methyladenosine(2503) in 23S rRNA + 5'-deoxyadenosine + L-methionine + 2 oxidized [2Fe-2S]-[ferredoxin] + S-adenosyl-L-homocysteine. It catalyses the reaction adenosine(37) in tRNA + 2 reduced [2Fe-2S]-[ferredoxin] + 2 S-adenosyl-L-methionine = 2-methyladenosine(37) in tRNA + 5'-deoxyadenosine + L-methionine + 2 oxidized [2Fe-2S]-[ferredoxin] + S-adenosyl-L-homocysteine. Specifically methylates position 2 of adenine 2503 in 23S rRNA and position 2 of adenine 37 in tRNAs. The sequence is that of Probable dual-specificity RNA methyltransferase RlmN from Bacteroides fragilis (strain ATCC 25285 / DSM 2151 / CCUG 4856 / JCM 11019 / LMG 10263 / NCTC 9343 / Onslow / VPI 2553 / EN-2).